The following is a 248-amino-acid chain: tRNA (guanine-N(1)-)-methyltransferase (248 aa).

S-adenosyl-L-methionine is bound by residues glycine 113 and 133-138 (IGDYVL).

The protein belongs to the RNA methyltransferase TrmD family. Homodimer.

The protein resides in the cytoplasm. It carries out the reaction guanosine(37) in tRNA + S-adenosyl-L-methionine = N(1)-methylguanosine(37) in tRNA + S-adenosyl-L-homocysteine + H(+). Specifically methylates guanosine-37 in various tRNAs. The chain is tRNA (guanine-N(1)-)-methyltransferase from Shewanella halifaxensis (strain HAW-EB4).